The chain runs to 247 residues: Putative urease accessory protein UreD homolog (247 aa).

The protein belongs to the UreD family. UreD, UreF and UreG form a complex that acts as a GTP-hydrolysis-dependent molecular chaperone, activating the urease apoprotein by helping to assemble the nickel containing metallocenter of UreC. The UreE protein probably delivers the nickel.

Its subcellular location is the cytoplasm. In terms of biological role, required for maturation of urease via the functional incorporation of the urease nickel metallocenter. The chain is Putative urease accessory protein UreD homolog from Escherichia coli O157:H7.